A 509-amino-acid chain; its full sequence is Lysine--tRNA ligase (509 aa).

Mg(2+) is bound by residues E395 and E402.

The protein belongs to the class-II aminoacyl-tRNA synthetase family. As to quaternary structure, homodimer. Mg(2+) is required as a cofactor.

Its subcellular location is the cytoplasm. It catalyses the reaction tRNA(Lys) + L-lysine + ATP = L-lysyl-tRNA(Lys) + AMP + diphosphate. The protein is Lysine--tRNA ligase of Fervidobacterium nodosum (strain ATCC 35602 / DSM 5306 / Rt17-B1).